Here is a 262-residue protein sequence, read N- to C-terminus: Tryptophan synthase alpha chain (262 aa).

Residues glutamate 48 and aspartate 59 each act as proton acceptor in the active site.

It belongs to the TrpA family. In terms of assembly, tetramer of two alpha and two beta chains.

It carries out the reaction (1S,2R)-1-C-(indol-3-yl)glycerol 3-phosphate + L-serine = D-glyceraldehyde 3-phosphate + L-tryptophan + H2O. It participates in amino-acid biosynthesis; L-tryptophan biosynthesis; L-tryptophan from chorismate: step 5/5. In terms of biological role, the alpha subunit is responsible for the aldol cleavage of indoleglycerol phosphate to indole and glyceraldehyde 3-phosphate. The sequence is that of Tryptophan synthase alpha chain from Helicobacter pylori (strain Shi470).